A 333-amino-acid chain; its full sequence is Gamma-D-glutamyl-L-lysine dipeptidyl-peptidase (333 aa).

Residues 1–23 (MKKVGTAFLTTLFIFSSFTSAHA) form the signal peptide. Residues glutamate 83, tyrosine 118, 237-239 (DCS), and 256-257 (DS) each bind substrate. A NlpC/P60 domain is found at 208-332 (TPAADDLINT…EEYAGARRYL (125 aa)). Cysteine 238 acts as the Nucleophile in catalysis. The active-site Proton acceptor is the histidine 291. Histidine 303 is an active-site residue.

It belongs to the peptidase C40 family. In terms of assembly, monomer in solution.

The catalysed reaction is The enzyme releases L-Ala-gamma-D-Glu dipeptides from cell wall peptides via cleavage of an L-Ala-gamma-D-Glu-|-L-Lys bond.. It participates in cell wall degradation; peptidoglycan degradation. Its function is as follows. Specifically hydrolyzes gamma-D-glutamyl-L-lysine bonds in murein peptides, releasing L-Ala-D-Glu. The polypeptide is Gamma-D-glutamyl-L-lysine dipeptidyl-peptidase (Bacillus cereus (strain ATCC 10987 / NRS 248)).